The following is a 718-amino-acid chain: Polyribonucleotide nucleotidyltransferase (718 aa).

Mg(2+) is bound by residues D487 and D493. The KH domain occupies 554-613; it reads PRIETFKIPTDKIREVIGTGGKVIREIVEKTGAKVNIEDDGTVKVASSDGESIKAAIKWI. The S1 motif domain occupies 623 to 691; that stretch reads GEIYEGTVVK…DRGKTRLSMK (69 aa). A disordered region spans residues 692 to 718; it reads VVDQETGEDLEAKQKAEGDAPREAAGE. Positions 701-718 are enriched in basic and acidic residues; the sequence is LEAKQKAEGDAPREAAGE.

Belongs to the polyribonucleotide nucleotidyltransferase family. Mg(2+) serves as cofactor.

The protein localises to the cytoplasm. It catalyses the reaction RNA(n+1) + phosphate = RNA(n) + a ribonucleoside 5'-diphosphate. In terms of biological role, involved in mRNA degradation. Catalyzes the phosphorolysis of single-stranded polyribonucleotides processively in the 3'- to 5'-direction. The protein is Polyribonucleotide nucleotidyltransferase of Nitrobacter winogradskyi (strain ATCC 25391 / DSM 10237 / CIP 104748 / NCIMB 11846 / Nb-255).